A 710-amino-acid polypeptide reads, in one-letter code: MDQTEEPPLNTHQQHPEEVEHHENGATKMFRKVKARAKKFKNSLTKHGQSNEHEQDHDLVEEDDDDDELEPEVIDAPGVTGKPRETNVPASEEIIPPGTKVFPVVSSDYTKPTESVPVQEASYGHDAPAHSVRTTFTSDKEEKRDVPIHHPLSELSDREESRETHHESLNTPVSLLSGTEDVTSTFAPSGDDEYLDGQRKVNVETPITLEEESAVSDYLSGVSNYQSKVTDPTKEETGGVPEIAESFGNMEVTDESPDQKPGQFERDLSTRSKEFKEFDQDFDSVLGKDSPAKFPGESGVVFPVGFGDESGAELEKDFPTRSHDFDMKTETGMDTNSPSRSHEFDLKTESGNDKNSPMGFGSESGAELEKEFDQKNDSGRNEYSPESDGGLGAPLGGNFPVRSHELDLKNESDIDKDVPTGFDGEPDFLAKGRPGYGEASEEDKFPARSDDVEVETELGRDPKTETLDQFSPELSHPKERDEFKESRDDFEETRDEKTEEPKQSTYTEKFASMLGYSGEIPVGDQTQVAGTVDEKLTPVNEKDQETESAVTTKLPISGGGSGVEEQRGEDKSVSGRDYVAEKLTTEEEDKAFSDMVAEKLQIGGEEEKKETTTKEVEKISTEKAASEEGEAVEEEVKGGGGMVGRIKGWFGGGATDEVKPESPHSVEEAPKSSGWFGGGATEEVKPKSPHSVEESPQSLGSTVVPVQKEL.

3 disordered regions span residues M1–Q198, Y225–S269, and G305–T507. Residues Q14–G25 show a composition bias toward basic and acidic residues. Basic residues predominate over residues M29 to K41. The span at Q49–D58 shows a compositional bias: basic and acidic residues. Acidic residues predominate over residues L59 to V73. Over residues S138 to S168 the composition is skewed to basic and acidic residues. The segment covering L169 to A187 has biased composition (polar residues). Tandem repeats lie at residues P303–K316, D317–T331, N336–S350, P357–K370, and N398–S412. The tract at residues P303 to K370 is 2 X 14 AA repeats of P-[MV]-G-F-G-[DS]-E-S-G-A-E-L-E-K. 6 stretches are compositionally biased toward basic and acidic residues: residues E313 to T331, R340 to N352, E367 to R380, R402 to V418, E442 to T466, and S475 to R487. Positions D317 to S412 are 3 X 15 AA repeats of [DN]-[FS]-P-[STV]-R-S-H-[DE]-[FL]-D-[LM]-K-[NT]-E-[ST]. 3 tandem repeats follow at residues F510–L514, V532–L536, and V550–L554. The 5 X 5 AA repeats of [FV]-[ADT]-[EST]-[KM]-L stretch occupies residues F510–L600. The tract at residues T537–D577 is disordered. The span at E564–D577 shows a compositional bias: basic and acidic residues. 2 tandem repeats follow at residues V579–L583 and V596–L600. The segment at Q601–L710 is disordered. Over residues E605–S626 the composition is skewed to basic and acidic residues. Phosphoserine is present on S626. The span at G638–A654 shows a compositional bias: gly residues. Repeat copies occupy residues G648 to P670 and G674 to P696. Positions G648–P696 are 2 X 23 AA repeats. Basic and acidic residues-rich tracts occupy residues D656 to P670 and E682 to E693.

The protein belongs to the LTI78/LTI65 family. Accumulates rapidly in leaves, stems, roots, flower petals, filaments, and sepals during cold-acclimation.

The protein localises to the cytoplasm. Functionally, involved in responses to abiotic stresses. Regulates probably root elongation in cold conditions. This Arabidopsis thaliana (Mouse-ear cress) protein is Low-temperature-induced 78 kDa protein.